A 588-amino-acid polypeptide reads, in one-letter code: MRFSQLFVNTLKESPKDAVLKSHQYLIRGGFIQQIGSGIYNFLPLGKKLLDKVRFIVKEEMDKSGAQEILMGFVTPAELWRESGRYEQYGRELLRFVDRKENEFVLGPTHEEVITHIAKNTIKSYKQLPLHLYQIHSKFRDELRPRFGLMRGREFIMKDGYSFHSNYADLNREFDVMEATYKRILQRMGLEFKVVEADSGAIGGSGSKEFMVLAPCGEDTIVVCKGCEYGANIEASKRAPRTAPRPNEIKYDSNAPQAAFARFFTPDIKNIESLSAFFKVDKFWTIKAIVKKAIKANNESELVYFFVRGDDEGEETKMLNAINKHTNCYLALEDASVEEIQAAGLEVGFIGAYGLRHITQATHIYFDESLRDASNLICGANEKDYHFVGVDLSTFEGLEYADIAQSKEGDLCPKCAQELYYTKGIEVGHIFKLGDKYSRAMNAQFLDNDGKTQPLIMGCYGFGISRILPAILEQKSDDLGCIWSKEVSVFDIAIIISNTKDSVQNDFGSALYEILSACGIDVLLDERDERFGVKMKDFELLGFHSALIVGKGLNEGKVELIKREGLKKYELCATDKEILLEEILKIIA.

Belongs to the class-II aminoacyl-tRNA synthetase family. ProS type 1 subfamily. As to quaternary structure, homodimer.

It localises to the cytoplasm. It carries out the reaction tRNA(Pro) + L-proline + ATP = L-prolyl-tRNA(Pro) + AMP + diphosphate. Functionally, catalyzes the attachment of proline to tRNA(Pro) in a two-step reaction: proline is first activated by ATP to form Pro-AMP and then transferred to the acceptor end of tRNA(Pro). As ProRS can inadvertently accommodate and process non-cognate amino acids such as alanine and cysteine, to avoid such errors it has two additional distinct editing activities against alanine. One activity is designated as 'pretransfer' editing and involves the tRNA(Pro)-independent hydrolysis of activated Ala-AMP. The other activity is designated 'posttransfer' editing and involves deacylation of mischarged Ala-tRNA(Pro). The misacylated Cys-tRNA(Pro) is not edited by ProRS. In Helicobacter hepaticus (strain ATCC 51449 / 3B1), this protein is Proline--tRNA ligase.